A 160-amino-acid polypeptide reads, in one-letter code: Large ribosomal subunit protein uL10 (160 aa).

This sequence belongs to the universal ribosomal protein uL10 family. As to quaternary structure, part of the ribosomal stalk of the 50S ribosomal subunit. The N-terminus interacts with L11 and the large rRNA to form the base of the stalk. The C-terminus forms an elongated spine to which L12 dimers bind in a sequential fashion forming a multimeric L10(L12)X complex.

Functionally, forms part of the ribosomal stalk, playing a central role in the interaction of the ribosome with GTP-bound translation factors. The chain is Large ribosomal subunit protein uL10 from Ehrlichia canis (strain Jake).